The primary structure comprises 130 residues: Small ribosomal subunit protein eS6 (130 aa).

The tract at residues 78-98 (SGPPGFRPERKGERRRKTVRG) is disordered.

This sequence belongs to the eukaryotic ribosomal protein eS6 family.

The sequence is that of Small ribosomal subunit protein eS6 from Methanopyrus kandleri (strain AV19 / DSM 6324 / JCM 9639 / NBRC 100938).